A 352-amino-acid chain; its full sequence is S-adenosylmethionine:tRNA ribosyltransferase-isomerase (352 aa).

This sequence belongs to the QueA family. As to quaternary structure, monomer.

It localises to the cytoplasm. The catalysed reaction is 7-aminomethyl-7-carbaguanosine(34) in tRNA + S-adenosyl-L-methionine = epoxyqueuosine(34) in tRNA + adenine + L-methionine + 2 H(+). The protein operates within tRNA modification; tRNA-queuosine biosynthesis. Functionally, transfers and isomerizes the ribose moiety from AdoMet to the 7-aminomethyl group of 7-deazaguanine (preQ1-tRNA) to give epoxyqueuosine (oQ-tRNA). In Syntrophomonas wolfei subsp. wolfei (strain DSM 2245B / Goettingen), this protein is S-adenosylmethionine:tRNA ribosyltransferase-isomerase.